A 199-amino-acid polypeptide reads, in one-letter code: Large ribosomal subunit protein eL13B (199 aa).

2 positions are modified to phosphothreonine: Thr144 and Thr152.

This sequence belongs to the eukaryotic ribosomal protein eL13 family. In terms of assembly, component of the large ribosomal subunit (LSU). Mature yeast ribosomes consist of a small (40S) and a large (60S) subunit. The 40S small subunit contains 1 molecule of ribosomal RNA (18S rRNA) and 33 different proteins (encoded by 57 genes). The large 60S subunit contains 3 rRNA molecules (25S, 5.8S and 5S rRNA) and 46 different proteins (encoded by 81 genes).

It localises to the cytoplasm. Its function is as follows. Component of the ribosome, a large ribonucleoprotein complex responsible for the synthesis of proteins in the cell. The small ribosomal subunit (SSU) binds messenger RNAs (mRNAs) and translates the encoded message by selecting cognate aminoacyl-transfer RNA (tRNA) molecules. The large subunit (LSU) contains the ribosomal catalytic site termed the peptidyl transferase center (PTC), which catalyzes the formation of peptide bonds, thereby polymerizing the amino acids delivered by tRNAs into a polypeptide chain. The nascent polypeptides leave the ribosome through a tunnel in the LSU and interact with protein factors that function in enzymatic processing, targeting, and the membrane insertion of nascent chains at the exit of the ribosomal tunnel. In Saccharomyces cerevisiae (strain ATCC 204508 / S288c) (Baker's yeast), this protein is Large ribosomal subunit protein eL13B.